We begin with the raw amino-acid sequence, 319 residues long: Acetyl-coenzyme A carboxylase carboxyl transferase subunit alpha (319 aa).

Residues 35-296 (NIDEEVHRLR…KTQLLADLAD (262 aa)) enclose the CoA carboxyltransferase C-terminal domain.

It belongs to the AccA family. As to quaternary structure, acetyl-CoA carboxylase is a heterohexamer composed of biotin carboxyl carrier protein (AccB), biotin carboxylase (AccC) and two subunits each of ACCase subunit alpha (AccA) and ACCase subunit beta (AccD).

It is found in the cytoplasm. The catalysed reaction is N(6)-carboxybiotinyl-L-lysyl-[protein] + acetyl-CoA = N(6)-biotinyl-L-lysyl-[protein] + malonyl-CoA. It functions in the pathway lipid metabolism; malonyl-CoA biosynthesis; malonyl-CoA from acetyl-CoA: step 1/1. In terms of biological role, component of the acetyl coenzyme A carboxylase (ACC) complex. First, biotin carboxylase catalyzes the carboxylation of biotin on its carrier protein (BCCP) and then the CO(2) group is transferred by the carboxyltransferase to acetyl-CoA to form malonyl-CoA. The sequence is that of Acetyl-coenzyme A carboxylase carboxyl transferase subunit alpha from Cronobacter sakazakii (strain ATCC BAA-894) (Enterobacter sakazakii).